Reading from the N-terminus, the 692-residue chain is Protein adenylyltransferase SelO-1, mitochondrial (692 aa).

The transit peptide at 1–24 directs the protein to the mitochondrion; the sequence is MASVGSRLTRFYISRPGVIARRFL. ATP contacts are provided by glycine 142, glycine 144, lysine 176, aspartate 188, glycine 189, arginine 246, and arginine 253. Aspartate 337 functions as the Proton acceptor in the catalytic mechanism. Asparagine 338 and aspartate 347 together coordinate Mg(2+). Aspartate 347 lines the ATP pocket. Residues 637–676 are disordered; sequence LEQPGWMGRGGAAIPGERDETEEEGSNSSGAGARGLVPYD. Residue selenocysteine 690 is a non-standard amino acid, selenocysteine.

The protein belongs to the SELO family. It depends on Mg(2+) as a cofactor.

It is found in the mitochondrion. It carries out the reaction L-tyrosyl-[protein] + ATP = O-(5'-adenylyl)-L-tyrosyl-[protein] + diphosphate. It catalyses the reaction L-threonyl-[protein] + ATP = 3-O-(5'-adenylyl)-L-threonyl-[protein] + diphosphate. The catalysed reaction is L-seryl-[protein] + ATP = 3-O-(5'-adenylyl)-L-seryl-[protein] + diphosphate. Catalyzes the transfer of adenosine 5'-monophosphate (AMP) to Ser, Thr and Tyr residues of target proteins (AMPylation). May be a redox-active mitochondrial selenoprotein which interacts with a redox target protein. This chain is Protein adenylyltransferase SelO-1, mitochondrial, found in Danio rerio (Zebrafish).